The chain runs to 138 residues: Large ribosomal subunit protein uL14 (138 aa).

This sequence belongs to the universal ribosomal protein uL14 family. In terms of assembly, part of the 50S ribosomal subunit. Forms a cluster with proteins L3 and L24e, part of which may contact the 16S rRNA in 2 intersubunit bridges.

In terms of biological role, binds to 23S rRNA. Forms part of two intersubunit bridges in the 70S ribosome. The chain is Large ribosomal subunit protein uL14 from Hyperthermus butylicus (strain DSM 5456 / JCM 9403 / PLM1-5).